The following is a 66-amino-acid chain: Large ribosomal subunit protein bL35 (66 aa).

2 stretches are compositionally biased toward basic residues: residues 1 to 15 (MSKL…KRFK) and 22 to 43 (ILHK…RKRR). The disordered stretch occupies residues 1 to 43 (MSKLKTRSSAAKRFKVTATGKILHKKAGKRHNLSKKSESRKRR).

It belongs to the bacterial ribosomal protein bL35 family.

The protein is Large ribosomal subunit protein bL35 of Dictyoglomus turgidum (strain DSM 6724 / Z-1310).